A 215-amino-acid polypeptide reads, in one-letter code: Pre-hexon-linking protein VIII (215 aa).

Residue T62 is modified to Phosphothreonine; by host. Residues 110–150 (AWINYKNGSVRYEAPLQLAEEQVGGPLNAFAIKHQLQLAGG) constitute a propeptide that is removed on maturation.

It belongs to the adenoviridae hexon-linking protein family. As to quaternary structure, interacts with the peripentonal hexons as well as the hexons in the facets. Part of a complex composed of the core-capsid bridging protein, the endosome lysis protein VI and the hexon-linking protein VIII; these interactions bridge the virus core to the capsid. In terms of processing, cleaved by the viral protease during virion maturation. May cause the middle segment to be shed from the capsid.

Its subcellular location is the virion. It localises to the host nucleus. In terms of biological role, structural component of the virion that acts as a cement protein on the capsid interior and which glue the peripentonal hexons and group-of-nine hexons together. This chain is Pre-hexon-linking protein VIII, found in Murine adenovirus A serotype 1 (MAdV-1).